Consider the following 448-residue polypeptide: Probable xyloglucan 6-xylosyltransferase 1 (448 aa).

The Cytoplasmic segment spans residues 1–19 (MWVAERVVGERRMREIQRF). A helical; Signal-anchor for type II membrane protein membrane pass occupies residues 20–42 (ARNAKLTVVCLLLTVVVLRGTVG). The Lumenal portion of the chain corresponds to 43–448 (AGKFGTPQQD…AFKAMKTTST (406 aa)). The tract at residues 71 to 113 (HHDALSRGGGSSSSSGRAAQRDDEPDPPPRTLRDPPYTLGPKI) is disordered. Asn421 carries N-linked (GlcNAc...) asparagine glycosylation.

This sequence belongs to the glycosyltransferase 34 family.

It localises to the golgi apparatus membrane. The catalysed reaction is Transfers an alpha-D-xylosyl residue from UDP-D-xylose to a glucose residue in xyloglucan, forming an alpha-(1-&gt;6)-D-xylosyl-D-glucose linkage.. Functionally, probable xyloglucan xylosyltransferase involved in the biosynthesis of xyloglucan in roots. The protein is Probable xyloglucan 6-xylosyltransferase 1 of Oryza sativa subsp. indica (Rice).